Consider the following 350-residue polypeptide: N(4)-bis(aminopropyl)spermidine synthase (350 aa).

Belongs to the branched-chain polyamine synthase family.

Its subcellular location is the cytoplasm. It carries out the reaction 2 S-adenosyl 3-(methylsulfanyl)propylamine + spermidine = N(4)-bis(aminopropyl)spermidine + 2 S-methyl-5'-thioadenosine + 2 H(+). It participates in amine and polyamine biosynthesis. Involved in the biosynthesis of branched-chain polyamines, which support the growth of thermophiles under high-temperature conditions. Catalyzes the sequential condensation of spermidine with the aminopropyl groups of decarboxylated S-adenosylmethionines to produce N(4)-bis(aminopropyl)spermidine via N(4)-aminopropylspermidine. This is N(4)-bis(aminopropyl)spermidine synthase from Methanocaldococcus jannaschii (strain ATCC 43067 / DSM 2661 / JAL-1 / JCM 10045 / NBRC 100440) (Methanococcus jannaschii).